The chain runs to 284 residues: MGNGWHEWPLVIFTVLGQCVVGALIVSGIGWFAAKNDADRQRIVRGMFFLWLLMGVGFIASVMHLGSPLRAFNSLNRIGASGLSNEIAAGSIFFAVGGLWWLVAVIGKMPQALGKLWLLFSMALGVIFVWMMTCVYQIDTVPTWHNGYTTLAFFLTVLLSGPILAAAILRAARVTFNTTPFAIISVLALIACAGVIVLQGLSLASIHSSVQQASALVPDYASLQVWRVVLLCAGLGCWLCPLIRRREPHVAGLILGLILILGGEMIGRVLFYGLHMTVGMAIAG.

The Periplasmic segment spans residues 1–9 (MGNGWHEWP). A helical transmembrane segment spans residues 10-30 (LVIFTVLGQCVVGALIVSGIG). Residues 31-45 (WFAAKNDADRQRIVR) lie on the Cytoplasmic side of the membrane. A helical transmembrane segment spans residues 46-66 (GMFFLWLLMGVGFIASVMHLG). The Periplasmic segment spans residues 67–86 (SPLRAFNSLNRIGASGLSNE). A helical transmembrane segment spans residues 87-107 (IAAGSIFFAVGGLWWLVAVIG). Residues 108 to 115 (KMPQALGK) are Cytoplasmic-facing. A helical transmembrane segment spans residues 116–136 (LWLLFSMALGVIFVWMMTCVY). Topologically, residues 137–148 (QIDTVPTWHNGY) are periplasmic. The chain crosses the membrane as a helical span at residues 149 to 169 (TTLAFFLTVLLSGPILAAAIL). The Cytoplasmic portion of the chain corresponds to 170–180 (RAARVTFNTTP). Residues 181–201 (FAIISVLALIACAGVIVLQGL) traverse the membrane as a helical segment. Residues 202 to 222 (SLASIHSSVQQASALVPDYAS) are Periplasmic-facing. The chain crosses the membrane as a helical span at residues 223-243 (LQVWRVVLLCAGLGCWLCPLI). The Cytoplasmic segment spans residues 244-250 (RRREPHV). A helical membrane pass occupies residues 251–271 (AGLILGLILILGGEMIGRVLF). Residues 272–284 (YGLHMTVGMAIAG) are Periplasmic-facing.

Belongs to the DmsC family. The complex consists of three subunits: YnfF, the reductase; YnfG, an electron transfer protein, and YnfH, a membrane anchor protein.

It localises to the cell inner membrane. Terminal reductase during anaerobic growth on various sulfoxide and N-oxide compounds. The C subunit anchors the other two subunits to the membrane and stabilize the catalytic subunits. This is Anaerobic dimethyl sulfoxide reductase chain YnfH (ynfH) from Escherichia coli (strain K12).